Reading from the N-terminus, the 181-residue chain is Inorganic pyrophosphatase (181 aa).

Substrate is bound by residues Lys16, Arg30, and Tyr42. Mg(2+) is bound by residues Asp52, Asp57, and Asp89. Tyr126 provides a ligand contact to substrate.

Belongs to the PPase family. As to quaternary structure, homohexamer. Requires Mg(2+) as cofactor.

It is found in the cytoplasm. It carries out the reaction diphosphate + H2O = 2 phosphate + H(+). In terms of biological role, catalyzes the hydrolysis of inorganic pyrophosphate (PPi) forming two phosphate ions. This is Inorganic pyrophosphatase from Ureaplasma parvum serovar 3 (strain ATCC 700970).